Here is a 915-residue protein sequence, read N- to C-terminus: Metabotropic glutamate receptor 7 (915 aa).

Positions 1-34 (MVQLGKLLRVLTLMKFPCCVLEVLLCVLAAAARG) are cleaved as a signal peptide. Residues 35–590 (QEMYAPHSIR…IIKLEWHSPW (556 aa)) lie on the Extracellular side of the membrane. Cysteines 67 and 109 form a disulfide. N-linked (GlcNAc...) asparagine glycosylation is present at asparagine 98. Residues serine 159, 180-182 (AST), tyrosine 230, and aspartate 314 contribute to the L-glutamate site. Disulfide bonds link cysteine 249–cysteine 541, cysteine 374–cysteine 390, cysteine 430–cysteine 437, cysteine 523–cysteine 542, cysteine 527–cysteine 545, cysteine 548–cysteine 560, and cysteine 563–cysteine 576. Residue lysine 407 coordinates L-glutamate. Asparagine 458 and asparagine 486 each carry an N-linked (GlcNAc...) asparagine glycan. An N-linked (GlcNAc...) asparagine glycan is attached at asparagine 572. The helical transmembrane segment at 591–615 (AVIPVFLAMLGIIATIFVMATFIRY) threads the bilayer. At 616–627 (NDTPIVRASGRE) the chain is on the cytoplasmic side. A helical membrane pass occupies residues 628-648 (LSYVLLTGIFLCYIITFLMIA). Over 649–654 (KPDVAV) the chain is Extracellular. The helical transmembrane segment at 655–675 (CSFRRVFLGLGMCISYAALLT) threads the bilayer. The Cytoplasmic portion of the chain corresponds to 676 to 702 (KTNRIYRIFEQGKKSVTAPRLISPTSQ). The helical transmembrane segment at 703–723 (LAITSSLISVQLLGVFIWFGV) threads the bilayer. The Extracellular segment spans residues 724-753 (DPPNIIIDYDEHKTMNPEQARGVLKCDITD). A helical transmembrane segment spans residues 754-775 (LQIICSLGYSILLMVTCTVYAI). Over 776-788 (KTRGVPENFNEAK) the chain is Cytoplasmic. The helical transmembrane segment at 789-810 (PIGFTMYTTCIVWLAFIPIFFG) threads the bilayer. The Extracellular portion of the chain corresponds to 811-825 (TAQSAEKLYIQTTTL). Residues 826–850 (TISMNLSASVALGMLYMPKVYIIIF) traverse the membrane as a helical segment. The Cytoplasmic segment spans residues 851–915 (HPELNVQKRK…KYVSYNNLVI (65 aa)). The tract at residues 874 to 895 (SRLSHKPSDRPNGEAKTELCEN) is disordered. The segment covering 879–892 (KPSDRPNGEAKTEL) has biased composition (basic and acidic residues). Serine 900 bears the Phosphoserine mark.

It belongs to the G-protein coupled receptor 3 family. As to quaternary structure, homodimer. Interacts with PICK1.

Its subcellular location is the cell membrane. Functionally, G-protein coupled receptor activated by glutamate that regulates axon outgrowth through the MAPK-cAMP-PKA signaling pathway during neuronal development. Ligand binding causes a conformation change that triggers signaling via guanine nucleotide-binding proteins (G proteins) and modulates the activity of downstream effectors, such as adenylate cyclase that it inhibits. The protein is Metabotropic glutamate receptor 7 (Grm7) of Mus musculus (Mouse).